A 117-amino-acid chain; its full sequence is Protein P16 (117 aa).

A helical membrane pass occupies residues 7–24; that stretch reads LYWVGGGLVLILIWLWFR.

Its subcellular location is the virion membrane. Functionally, protein of the infection vertex complex, which increases the vertex stability. Anchors the vertex structure to the viral membrane. Essential for viral infectivity. This is Protein P16 (XVI) from Enterobacteria phage PRD1 (Bacteriophage PRD1).